We begin with the raw amino-acid sequence, 163 residues long: MLKRGLLFLTVLLLLFSFSSITNEVSASSSFDKGKYKKGDDASYFEPTGPYLMVNVTGVDGKGNELLSPHYVEFPIKPGTTLTKEKIEYYVEWALDATAYKEFRVVELDPSAKIEVTYYDKNKKKEETKSFPITEKGFVVPDLSEHIKNPGFNLITKVIIEKK.

Residues 1 to 27 (MLKRGLLFLTVLLLLFSFSSITNEVSA) form the signal peptide.

This sequence belongs to the staphylokinase family.

The protein resides in the secreted. In terms of biological role, potent plasminogen activator that converts plasminogen into plasmin. It forms a 1:1 complex with plasmin, which in turn activates other plasminogen molecules. This Staphylococcus aureus (strain MRSA252) protein is Staphylokinase (sak).